Consider the following 211-residue polypeptide: Protein-methionine-sulfoxide reductase heme-binding subunit MsrQ (211 aa).

Transmembrane regions (helical) follow at residues 8-28 (VIWL…WLVW), 54-74 (FLLA…PLLI), 82-102 (LWCF…ELGV), 116-136 (PYLT…FTST), and 153-173 (FVYL…KIIS).

Belongs to the MsrQ family. As to quaternary structure, heterodimer of a catalytic subunit (MsrP) and a heme-binding subunit (MsrQ). It depends on FMN as a cofactor. Heme b is required as a cofactor.

Its subcellular location is the cell inner membrane. Functionally, part of the MsrPQ system that repairs oxidized periplasmic proteins containing methionine sulfoxide residues (Met-O), using respiratory chain electrons. Thus protects these proteins from oxidative-stress damage caused by reactive species of oxygen and chlorine generated by the host defense mechanisms. MsrPQ is essential for the maintenance of envelope integrity under bleach stress, rescuing a wide series of structurally unrelated periplasmic proteins from methionine oxidation, including the primary periplasmic chaperone SurA and the lipoprotein Pal. MsrQ provides electrons for reduction to the reductase catalytic subunit MsrP, using the quinone pool of the respiratory chain. In Escherichia coli O6:K15:H31 (strain 536 / UPEC), this protein is Protein-methionine-sulfoxide reductase heme-binding subunit MsrQ.